Here is a 94-residue protein sequence, read N- to C-terminus: DNA-directed RNA polymerase subunit omega (94 aa).

It belongs to the RNA polymerase subunit omega family. As to quaternary structure, the RNAP catalytic core consists of 2 alpha, 1 beta, 1 beta' and 1 omega subunit. When a sigma factor is associated with the core the holoenzyme is formed, which can initiate transcription.

The enzyme catalyses RNA(n) + a ribonucleoside 5'-triphosphate = RNA(n+1) + diphosphate. Promotes RNA polymerase assembly. Latches the N- and C-terminal regions of the beta' subunit thereby facilitating its interaction with the beta and alpha subunits. The polypeptide is DNA-directed RNA polymerase subunit omega (Limosilactobacillus fermentum (strain NBRC 3956 / LMG 18251) (Lactobacillus fermentum)).